The following is a 98-amino-acid chain: Large ribosomal subunit protein uL23 (98 aa).

The protein belongs to the universal ribosomal protein uL23 family. As to quaternary structure, part of the 50S ribosomal subunit. Contacts protein L29, and trigger factor when it is bound to the ribosome.

One of the early assembly proteins it binds 23S rRNA. One of the proteins that surrounds the polypeptide exit tunnel on the outside of the ribosome. Forms the main docking site for trigger factor binding to the ribosome. The sequence is that of Large ribosomal subunit protein uL23 from Parafrankia sp. (strain EAN1pec).